The following is a 235-amino-acid chain: Dephospho-CoA kinase (235 aa).

In terms of domain architecture, DPCK spans 15–219; the sequence is NVGLTGSISC…KKERLQRKSA (205 aa). 23-28 provides a ligand contact to ATP; that stretch reads SCGKST.

This sequence belongs to the CoaE family.

It is found in the cytoplasm. The catalysed reaction is 3'-dephospho-CoA + ATP = ADP + CoA + H(+). The protein operates within cofactor biosynthesis; coenzyme A biosynthesis; CoA from (R)-pantothenate: step 5/5. Catalyzes the phosphorylation of the 3'-hydroxyl group of dephosphocoenzyme A to form coenzyme A. The protein is Dephospho-CoA kinase of Syntrophus aciditrophicus (strain SB).